Here is a 418-residue protein sequence, read N- to C-terminus: Serine--tRNA ligase (418 aa).

232-234 serves as a coordination point for L-serine; that stretch reads TAE. ATP-binding positions include 263-265 and Val-279; that span reads RRE. Glu-286 lines the L-serine pocket. Residue 350 to 353 coordinates ATP; sequence EISS. Ser-385 is a binding site for L-serine.

This sequence belongs to the class-II aminoacyl-tRNA synthetase family. Type-1 seryl-tRNA synthetase subfamily. Homodimer. The tRNA molecule binds across the dimer.

The protein localises to the cytoplasm. It catalyses the reaction tRNA(Ser) + L-serine + ATP = L-seryl-tRNA(Ser) + AMP + diphosphate + H(+). It carries out the reaction tRNA(Sec) + L-serine + ATP = L-seryl-tRNA(Sec) + AMP + diphosphate + H(+). It functions in the pathway aminoacyl-tRNA biosynthesis; selenocysteinyl-tRNA(Sec) biosynthesis; L-seryl-tRNA(Sec) from L-serine and tRNA(Sec): step 1/1. In terms of biological role, catalyzes the attachment of serine to tRNA(Ser). Is also able to aminoacylate tRNA(Sec) with serine, to form the misacylated tRNA L-seryl-tRNA(Sec), which will be further converted into selenocysteinyl-tRNA(Sec). The protein is Serine--tRNA ligase of Leptospira biflexa serovar Patoc (strain Patoc 1 / Ames).